A 1396-amino-acid polypeptide reads, in one-letter code: DNA-directed RNA polymerase subunit beta' (1396 aa).

The Zn(2+) site is built by Cys-70, Cys-72, Cys-85, and Cys-88. 3 residues coordinate Mg(2+): Asp-460, Asp-462, and Asp-464. Positions 814, 889, 896, and 899 each coordinate Zn(2+).

The protein belongs to the RNA polymerase beta' chain family. As to quaternary structure, the RNAP catalytic core consists of 2 alpha, 1 beta, 1 beta' and 1 omega subunit. When a sigma factor is associated with the core the holoenzyme is formed, which can initiate transcription. It depends on Mg(2+) as a cofactor. The cofactor is Zn(2+).

It carries out the reaction RNA(n) + a ribonucleoside 5'-triphosphate = RNA(n+1) + diphosphate. DNA-dependent RNA polymerase catalyzes the transcription of DNA into RNA using the four ribonucleoside triphosphates as substrates. This is DNA-directed RNA polymerase subunit beta' from Hahella chejuensis (strain KCTC 2396).